The following is a 307-amino-acid chain: Ribulose bisphosphate carboxylase/oxygenase activase, chloroplastic (307 aa).

The transit peptide at 1-46 (MSIPDDKEAGTIDEFLQKEGVLDILQKLDHDLVGLKPVKDRVREIA) directs the protein to the chloroplast. 73–80 (GSPGTGKT) provides a ligand contact to ATP.

The protein belongs to the CbxX/CfxQ family. Forms homooligomers. Forms heterohexameric rings with the plastid-encoded Rca subunit consisting of 3 of each nuclear- and plastidial-encoded subunits that alternate in the ring.

Its subcellular location is the plastid. It localises to the chloroplast. Functionally, required for the expression of ribulose 1,5-bisphosphate carboxylase/oxygenase (RuBisCo). ATPase involved in the activation of red-type RuBisCo, which tends to form inactive complexes with its substrate ribulose 1,5-bisphosphate (RuBP). Catalyzes the release of RuBP from inhibited RuBisCo in an ATP-dependent manner. Activation of RuBisCO involves the ATP-dependent carboxylation of the epsilon-amino group of lysine leading to a carbamate structure. The nuclear-encoded subunit plays a more critical role in activase function than the plastidial-encoded subunit. The polypeptide is Ribulose bisphosphate carboxylase/oxygenase activase, chloroplastic (Cyanidioschyzon merolae (strain NIES-3377 / 10D) (Unicellular red alga)).